The sequence spans 69 residues: Proteinase inhibitor (69 aa).

Residue serine 1 is modified to N-acetylserine. A disulfide bridge connects residues cysteine 4 and cysteine 49.

Its function is as follows. In vitro, strong inhibitor of bovine beta-trypsin, weak inhibitor of alpha-chymotrypsin, subtilisin BPN', subtilisin Carlsberg and cathepsin G. This chain is Proteinase inhibitor, found in Linum usitatissimum (Flax).